Here is a 559-residue protein sequence, read N- to C-terminus: MPEVKSDIEIARAARKQPIMEIGAKLGIPPEHLLPYGHDKAKVSAEFIAAQKTNGNGRLILVTAINPTPAGEGKTTTTVGLGDGLNRIGKKTIVCIREASLGPCFGIKGGAAGGGYAQVVPMEDINLHFTGDFHAITSAHNLLAALIDNHIYWGNEQAIDIRRIAWRRVMDMNDRALRQIIGSLGGVANGYPRETGFDITVASEVMAILCLAADIRDLEKRLGNIIIGYRRDKSPVYARDIKADGAMAVLLKDAMQPNLVQTLENNPAFVHGGPFANIAHGCNSVVATTTALKLADYVVTEAGFGADLGAEKFFDIKCRKAGLKPDAAVVVATVRAIKMNGGVKKDDLGKENLEALRKGCANLGRHVQNVKKFGVPVLVAINHFTSDTEAEIQAIKDYVRTLGSEAVLCRHWAEGSAGIEELAHKVVDLANAGHSQFSPLYPDDMPLFHKIETIAKDIYHASEVIADKLVRDQLRTWEDQGYGHLPICMAKTQYSFSTDPNLRGAPSGHAVPIREVRLAAGAGFVVVITGEIMTMPGLPKVPSSEKIRLNEAGYIEGLF.

68–75 contributes to the ATP binding site; sequence TPAGEGKT.

The protein belongs to the formate--tetrahydrofolate ligase family.

It carries out the reaction (6S)-5,6,7,8-tetrahydrofolate + formate + ATP = (6R)-10-formyltetrahydrofolate + ADP + phosphate. It participates in one-carbon metabolism; tetrahydrofolate interconversion. The polypeptide is Formate--tetrahydrofolate ligase (Sinorhizobium fredii (strain NBRC 101917 / NGR234)).